Consider the following 471-residue polypeptide: Putative multidrug resistance protein MdtD (471 aa).

Residues M1–Q11 lie on the Periplasmic side of the membrane. The chain crosses the membrane as a helical span at residues L12–A32. Over L33–H48 the chain is Cytoplasmic. A helical membrane pass occupies residues M49–A69. Residues D70–N76 lie on the Periplasmic side of the membrane. A helical membrane pass occupies residues I77–T97. Residues L98–L101 are Cytoplasmic-facing. A helical transmembrane segment spans residues L102 to M124. Topologically, residues K125 to T137 are periplasmic. Residues F138–V158 form a helical membrane-spanning segment. Topologically, residues E159–H164 are cytoplasmic. A helical transmembrane segment spans residues W165–M185. Residues P186–D196 are Periplasmic-facing. The chain crosses the membrane as a helical span at residues L197–S217. Residues K218 to P224 lie on the Cytoplasmic side of the membrane. The helical transmembrane segment at L225–A245 threads the bilayer. The Periplasmic portion of the chain corresponds to R246–T262. A helical transmembrane segment spans residues F263–M283. Residues T284 to P285 are Cytoplasmic-facing. Residues V286–M306 form a helical membrane-spanning segment. At V307 to T341 the chain is on the periplasmic side. Residues L342–L362 form a helical membrane-spanning segment. Residues Q363 to S395 lie on the Cytoplasmic side of the membrane. Residues M396–F416 form a helical membrane-spanning segment. Residues G417–T430 are Periplasmic-facing. The helical transmembrane segment at V431–A451 threads the bilayer. Topologically, residues R452–Q471 are cytoplasmic.

Belongs to the major facilitator superfamily. TCR/Tet family.

The protein resides in the cell inner membrane. The polypeptide is Putative multidrug resistance protein MdtD (Shigella sonnei (strain Ss046)).